A 458-amino-acid polypeptide reads, in one-letter code: Protein amnionless (458 aa).

Residues 1 to 19 (MGALGRVLLWLQLCAMTRA) form the signal peptide. Topologically, residues 20-362 (AYKLWVPNTS…ELNQSSSGAG (343 aa)) are extracellular. An N-linked (GlcNAc...) asparagine glycan is attached at Asn-27. Cystine bridges form between Cys-43–Cys-96, Cys-137–Cys-213, Cys-205–Cys-211, Cys-223–Cys-249, Cys-234–Cys-250, and Cys-239–Cys-253. The interaction with CUBN stretch occupies residues 67 to 87 (SDMLLPLDGELVLASGAALSA). Residues 203-254 (QACTDASGCVCGNAEMLPWICASLLQPLGGRCPQAACQDPLLPQGQCCDLCG) enclose the VWFC domain. Asn-355 carries N-linked (GlcNAc...) asparagine glycosylation. The chain crosses the membrane as a helical span at residues 363 to 383 (LAGGVAALVLLALLGTVLLLL). Over 384 to 458 (HRSGRLRWRR…LFAGEAEAEA (75 aa)) the chain is Cytoplasmic.

Interacts (via extracellular region) with CUBN/cubilin. This gives rise to a huge complex containing one AMN chain and three CUBN chains. In terms of processing, N-glycosylated. A soluble form arises by proteolytic removal of the membrane anchor. As to expression, expressed in polarized epithelial cells which are specialized in resorption or transport, specifically kidney proximal tubules and intestinal epithelium.

The protein localises to the apical cell membrane. It localises to the cell membrane. Its subcellular location is the endosome membrane. It is found in the membrane. The protein resides in the coated pit. Its function is as follows. Membrane-bound component of the endocytic receptor formed by AMN and CUBN. Required for normal CUBN glycosylation and trafficking to the cell surface. The complex formed by AMN and CUBN is required for efficient absorption of vitamin B12. Required for normal CUBN-mediated protein transport in the kidney. This is Protein amnionless (Amn) from Mus musculus (Mouse).